Here is a 244-residue protein sequence, read N- to C-terminus: Small ribosomal subunit protein uS2 (244 aa).

Belongs to the universal ribosomal protein uS2 family.

This is Small ribosomal subunit protein uS2 from Buchnera aphidicola subsp. Acyrthosiphon pisum (strain 5A).